The chain runs to 138 residues: Large ribosomal subunit protein uL16 (138 aa).

This sequence belongs to the universal ribosomal protein uL16 family. As to quaternary structure, part of the 50S ribosomal subunit.

Binds 23S rRNA and is also seen to make contacts with the A and possibly P site tRNAs. This chain is Large ribosomal subunit protein uL16, found in Mycoplasmoides gallisepticum (strain R(low / passage 15 / clone 2)) (Mycoplasma gallisepticum).